Reading from the N-terminus, the 145-residue chain is MFDNLQRKFLNLIGIEIEEEDKPQESTKAKEENVKPKHETPKVVTIGKANQTEVTVYNLKLFDEVVKVCDALRENKIVVFNLEQVAEDHIQRIIDFVSGAVYVLDAKIHKVSKKIFVVVPRSIDLEVDEQLKEEFRTKGVFAWLK.

Positions 21–41 are disordered; that stretch reads DKPQESTKAKEENVKPKHETP. The span at 23–41 shows a compositional bias: basic and acidic residues; that stretch reads PQESTKAKEENVKPKHETP.

This sequence belongs to the SepF family. As to quaternary structure, homodimer. Interacts with FtsZ.

It localises to the cytoplasm. Cell division protein that is part of the divisome complex and is recruited early to the Z-ring. Probably stimulates Z-ring formation, perhaps through the cross-linking of FtsZ protofilaments. Its function overlaps with FtsA. The protein is Cell division protein SepF of Caldicellulosiruptor saccharolyticus (strain ATCC 43494 / DSM 8903 / Tp8T 6331).